A 640-amino-acid chain; its full sequence is Choline O-acetyltransferase (640 aa).

Residues 1-22 show a composition bias toward basic and acidic residues; it reads MPDLEKDMQKKEKDSRSKDEPA. Residues 1 to 28 form a disordered region; the sequence is MPDLEKDMQKKEKDSRSKDEPAVPKLPV. Catalysis depends on histidine 334, which acts as the Proton acceptor. CoA-binding positions include 412–424, serine 450, and glutamine 551; that span reads GKEF…TSPD.

This sequence belongs to the carnitine/choline acetyltransferase family. As to expression, detected in brain and in embryonic retina.

It carries out the reaction choline + acetyl-CoA = acetylcholine + CoA. Its function is as follows. Catalyzes the reversible synthesis of acetylcholine (ACh) from acetyl CoA and choline at cholinergic synapses. This is Choline O-acetyltransferase (CHAT) from Gallus gallus (Chicken).